The following is a 228-amino-acid chain: Lipoprotein-releasing system ATP-binding protein LolD 2 (228 aa).

The ABC transporter domain maps to 9–228 (RGLERVYKTE…KDGHLELQRV (220 aa)). An ATP-binding site is contributed by 42 to 49 (GPSGSGKS).

The protein belongs to the ABC transporter superfamily. Lipoprotein translocase (TC 3.A.1.125) family. The complex is composed of two ATP-binding proteins (LolD) and two transmembrane proteins (LolC and LolE).

It localises to the cell inner membrane. Functionally, part of the ABC transporter complex LolCDE involved in the translocation of mature outer membrane-directed lipoproteins, from the inner membrane to the periplasmic chaperone, LolA. Responsible for the formation of the LolA-lipoprotein complex in an ATP-dependent manner. This Caulobacter vibrioides (strain ATCC 19089 / CIP 103742 / CB 15) (Caulobacter crescentus) protein is Lipoprotein-releasing system ATP-binding protein LolD 2.